The chain runs to 132 residues: Pro-MCH 1 (132 aa).

Residues 1-24 (MRHYVLSISFAVALFLECYTPSTA) form the signal peptide. Cys-120 and Cys-129 are disulfide-bonded.

It belongs to the melanin-concentrating hormone family. As to expression, pituitary gland. Produced in neurons of lateral basal hypothalamus which project both to the brain and to the neural lobe of the pituitary gland from where MCH is released.

Its function is as follows. Plays a role in skin pigmentation by antagonizing the action of melanotropin alpha. Induces melanin concentration within the melanophores. May participate in the control of the hypothalamo-pituitary adrenal gland axis by inhibiting the release of ACTH. This chain is Pro-MCH 1 (mch1), found in Oncorhynchus keta (Chum salmon).